Here is a 960-residue protein sequence, read N- to C-terminus: Putative helicase L207/L206 (960 aa).

A disordered region spans residues 1-32 (MTSKTENKKSVSSKTGRTTNNSTNKKTTEKSV). Residues 12 to 25 (SSKTGRTTNNSTNK) are compositionally biased toward low complexity. Positions 646 to 807 (SMREYILTLL…FIKHSEATKK (162 aa)) constitute an SF3 helicase domain.

This chain is Putative helicase L207/L206, found in Acanthamoeba polyphaga mimivirus (APMV).